A 470-amino-acid polypeptide reads, in one-letter code: DNA primase large subunit (470 aa).

[4Fe-4S] cluster is bound by residues Cys279, Cys358, Cys376, and Cys414. Residues 449-470 (EEKKSAKQSNNKENENQSIDEK) are disordered.

This sequence belongs to the eukaryotic-type primase large subunit family. Heterodimer of a small subunit and a large subunit. [4Fe-4S] cluster is required as a cofactor.

In terms of biological role, DNA primase is the polymerase that synthesizes small RNA primers for the Okazaki fragments made during discontinuous DNA replication. This is DNA primase large subunit (prim2) from Dictyostelium discoideum (Social amoeba).